A 395-amino-acid chain; its full sequence is Selection and upkeep of intraepithelial T-cells protein 7 (395 aa).

The signal sequence occupies residues 1–25 (MMKPEFFCFSGFCVYFLFLQVVVSS). The 116-residue stretch at 26-141 (EKLRVTTPTR…DAAIMNLNVT (116 aa)) folds into the Ig-like V-type domain. At 26-248 (EKLRVTTPTR…FNRDRIWMES (223 aa)) the chain is on the extracellular side. A disulfide bond links C49 and C123. N92 and N139 each carry an N-linked (GlcNAc...) asparagine glycan. The Ig-like C1-type domain maps to 142–233 (AVGLETEIHV…TGEEKQTSII (92 aa)). Cysteines 163 and 217 form a disulfide. A helical transmembrane segment spans residues 249 to 269 (LASIVWIMLSVYILYIICFYW). The Cytoplasmic segment spans residues 270–287 (RTGCASGCLSKCFCVVTS). The helical transmembrane segment at 288–308 (WPVQIVHLLFCTGTFFAIYLP) threads the bilayer. Residues 309 to 329 (HRSRVSLSDPQFPLYNNWITE) are Extracellular-facing. A helical transmembrane segment spans residues 330-350 (LLFVILFLTICFALPIILLFI). The Cytoplasmic segment spans residues 351-395 (QFQFTSLTKWEKNKDGIMDQPRLGKAHETSSLYRKKTGKSWEQEK). Residues 371–395 (PRLGKAHETSSLYRKKTGKSWEQEK) are disordered.

It belongs to the SKINT family. As to expression, expressed in skin, thymus, testis and, to a lower extent, bladder.

Its subcellular location is the membrane. In terms of biological role, may act by engaging a cell surface molecule on immature T-cells in the embryonic thymus. In Mus musculus (Mouse), this protein is Selection and upkeep of intraepithelial T-cells protein 7 (Skint7).